The chain runs to 365 residues: tRNA 2-selenouridine synthase (365 aa).

Positions phenylalanine 16–aspartate 138 constitute a Rhodanese domain. The active-site S-selanylcysteine intermediate is the cysteine 98.

The protein belongs to the SelU family. Monomer.

The catalysed reaction is 5-methylaminomethyl-2-thiouridine(34) in tRNA + selenophosphate + (2E)-geranyl diphosphate + H2O + H(+) = 5-methylaminomethyl-2-selenouridine(34) in tRNA + (2E)-thiogeraniol + phosphate + diphosphate. It carries out the reaction 5-methylaminomethyl-2-thiouridine(34) in tRNA + (2E)-geranyl diphosphate = 5-methylaminomethyl-S-(2E)-geranyl-thiouridine(34) in tRNA + diphosphate. It catalyses the reaction 5-methylaminomethyl-S-(2E)-geranyl-thiouridine(34) in tRNA + selenophosphate + H(+) = 5-methylaminomethyl-2-(Se-phospho)selenouridine(34) in tRNA + (2E)-thiogeraniol. The enzyme catalyses 5-methylaminomethyl-2-(Se-phospho)selenouridine(34) in tRNA + H2O = 5-methylaminomethyl-2-selenouridine(34) in tRNA + phosphate. Involved in the post-transcriptional modification of the uridine at the wobble position (U34) of tRNA(Lys), tRNA(Glu) and tRNA(Gln). Catalyzes the conversion of 2-thiouridine (S2U-RNA) to 2-selenouridine (Se2U-RNA). Acts in a two-step process involving geranylation of 2-thiouridine (S2U) to S-geranyl-2-thiouridine (geS2U) and subsequent selenation of the latter derivative to 2-selenouridine (Se2U) in the tRNA chain. The polypeptide is tRNA 2-selenouridine synthase (Psychromonas ingrahamii (strain DSM 17664 / CCUG 51855 / 37)).